Here is a 181-residue protein sequence, read N- to C-terminus: Alkyl hydroperoxide reductase AhpD (181 aa).

The active-site Proton donor is the Cys-131. Cys-131 and Cys-134 are joined by a disulfide. The active-site Cysteine sulfenic acid (-SOH) intermediate is Cys-134.

The protein belongs to the AhpD family.

The catalysed reaction is N(6)-[(R)-dihydrolipoyl]-L-lysyl-[lipoyl-carrier protein] + a hydroperoxide = N(6)-[(R)-lipoyl]-L-lysyl-[lipoyl-carrier protein] + an alcohol + H2O. Its function is as follows. Antioxidant protein with alkyl hydroperoxidase activity. Required for the reduction of the AhpC active site cysteine residues and for the regeneration of the AhpC enzyme activity. This chain is Alkyl hydroperoxide reductase AhpD, found in Bradyrhizobium sp. (strain ORS 278).